The chain runs to 228 residues: Ribulose-phosphate 3-epimerase (228 aa).

Residue S9 coordinates substrate. 4 residues coordinate a divalent metal cation: H34, D36, H68, and D177. The active-site Proton acceptor is the D36. Residues H68, 177–179 (DGG), and 199–200 (GS) contribute to the substrate site. Residue D177 is the Proton donor of the active site.

This sequence belongs to the ribulose-phosphate 3-epimerase family. A divalent metal cation serves as cofactor.

It carries out the reaction D-ribulose 5-phosphate = D-xylulose 5-phosphate. It participates in carbohydrate degradation. Its function is as follows. Catalyzes the reversible epimerization of D-ribulose 5-phosphate to D-xylulose 5-phosphate. This chain is Ribulose-phosphate 3-epimerase, found in Buchnera aphidicola subsp. Schizaphis graminum (strain Sg).